The following is a 545-amino-acid chain: Esterase-5C (545 aa).

The first 19 residues, 1-19 (MLAARLIILLSFYWLSASA), serve as a signal peptide directing secretion. A disulfide bridge links cysteine 84 with cysteine 103. N-linked (GlcNAc...) asparagine glycosylation is present at asparagine 113. Residue serine 207 is the Acyl-ester intermediate of the active site. Residues cysteine 259 and cysteine 271 are joined by a disulfide bond. Residue asparagine 421 is glycosylated (N-linked (GlcNAc...) asparagine). Histidine 467 (charge relay system) is an active-site residue. A glycan (N-linked (GlcNAc...) asparagine) is linked at asparagine 507. Cysteine 515 and cysteine 536 are joined by a disulfide.

Belongs to the type-B carboxylesterase/lipase family.

It is found in the secreted. The enzyme catalyses a carboxylic ester + H2O = an alcohol + a carboxylate + H(+). This chain is Esterase-5C (Est-5C), found in Drosophila persimilis (Fruit fly).